The following is a 188-amino-acid chain: dCTP deaminase (188 aa).

DCTP is bound by residues 111-116 (KSTYAR), 135-137 (TLE), Gln156, Tyr170, and Gln180. The active-site Proton donor/acceptor is the Glu137.

The protein belongs to the dCTP deaminase family. In terms of assembly, homotrimer.

The enzyme catalyses dCTP + H2O + H(+) = dUTP + NH4(+). Its pathway is pyrimidine metabolism; dUMP biosynthesis; dUMP from dCTP (dUTP route): step 1/2. Functionally, catalyzes the deamination of dCTP to dUTP. The chain is dCTP deaminase from Nitrosomonas eutropha (strain DSM 101675 / C91 / Nm57).